A 412-amino-acid polypeptide reads, in one-letter code: Divalent metal cation transporter MntH (412 aa).

The next 10 helical transmembrane spans lie at 19-39 (LSLM…GNFA), 46-66 (AAYG…AMLI), 98-118 (WVQA…GAAI), 122-142 (LLLG…TFLI), 155-175 (MVIG…LVFS), 196-216 (AVLL…IYLH), 241-261 (IAMT…AAAF), 286-306 (AAAV…TVVG), 348-368 (VLVL…VPLL), and 392-412 (LIVV…MSGI).

The protein belongs to the NRAMP family.

The protein resides in the cell inner membrane. Its function is as follows. H(+)-stimulated, divalent metal cation uptake system. This is Divalent metal cation transporter MntH from Pectobacterium carotovorum subsp. carotovorum (strain PC1).